The following is a 303-amino-acid chain: Recombination-associated protein RdgC (303 aa).

Belongs to the RdgC family.

It localises to the cytoplasm. The protein resides in the nucleoid. Its function is as follows. May be involved in recombination. In Shewanella halifaxensis (strain HAW-EB4), this protein is Recombination-associated protein RdgC.